A 157-amino-acid chain; its full sequence is Transcription elongation factor GreA (157 aa).

Residues 14–37 (LRKELERLLKRRPLITEAIAEARE) are a coiled coil.

Belongs to the GreA/GreB family.

Necessary for efficient RNA polymerase transcription elongation past template-encoded arresting sites. The arresting sites in DNA have the property of trapping a certain fraction of elongating RNA polymerases that pass through, resulting in locked ternary complexes. Cleavage of the nascent transcript by cleavage factors such as GreA or GreB allows the resumption of elongation from the new 3'terminus. GreA releases sequences of 2 to 3 nucleotides. This is Transcription elongation factor GreA from Vibrio vulnificus (strain CMCP6).